Reading from the N-terminus, the 178-residue chain is Prion-like protein doppel (178 aa).

The N-terminal stretch at 1 to 25 (MRKHLGGCWLAIVCILLFSQLCSVK) is a signal peptide. Residues 27–50 (RGIKHRIKWNRKVLPSTSQVTEAR) are flexible tail. The interval 51–154 (TAEIRPGAFI…KHCDFWLERG (104 aa)) is globular. 2 disulfide bridges follow: cysteine 94–cysteine 147 and cysteine 108–cysteine 142. N-linked (GlcNAc...) asparagine glycans are attached at residues asparagine 98 and asparagine 110. The tract at residues 124-141 (KQDNKLYQRVLWQLIREL) is cu(2+) binding. Glycine 154 is lipidated: GPI-anchor amidated glycine. The propeptide at 155 to 178 (AGLRVTLDQPMMLCLLVFIWFIVK) is removed in mature form.

Belongs to the prion family. N-glycosylated. In terms of processing, O-glycosylated. As to expression, strongly expressed in testis. Detected at low levels in ovary, spleen, kidney and mammary gland.

It localises to the cell membrane. Its function is as follows. Required for normal acrosome reaction and for normal male fertility. Can bind Cu(2+). This chain is Prion-like protein doppel (PRND), found in Bos taurus (Bovine).